Here is a 104-residue protein sequence, read N- to C-terminus: MQKIRKGDKVVVLSGKDKGCSGEVIKVNPKENKAFVRGVNMVKRHQRQTQKQEAGIVSKEAPIHLSNLAIADPKDGKPTRVGFRMNVDGNKVRFAKRSGELING.

It belongs to the universal ribosomal protein uL24 family. Part of the 50S ribosomal subunit.

One of two assembly initiator proteins, it binds directly to the 5'-end of the 23S rRNA, where it nucleates assembly of the 50S subunit. In terms of biological role, one of the proteins that surrounds the polypeptide exit tunnel on the outside of the subunit. In Bartonella quintana (strain Toulouse) (Rochalimaea quintana), this protein is Large ribosomal subunit protein uL24.